Here is a 245-residue protein sequence, read N- to C-terminus: 5-oxoprolinase subunit A (245 aa).

Belongs to the LamB/PxpA family. Forms a complex composed of PxpA, PxpB and PxpC.

The enzyme catalyses 5-oxo-L-proline + ATP + 2 H2O = L-glutamate + ADP + phosphate + H(+). Catalyzes the cleavage of 5-oxoproline to form L-glutamate coupled to the hydrolysis of ATP to ADP and inorganic phosphate. This Neisseria meningitidis serogroup C (strain 053442) protein is 5-oxoprolinase subunit A.